The chain runs to 377 residues: Guanine nucleotide-binding protein subunit beta (377 aa).

WD repeat units lie at residues 63–93 (GHTG…IVWN), 105–135 (LPCA…SIFN), 154–185 (GHKG…VLWD), 202–233 (GHTA…RLWD), 246–276 (CHEG…RLFD), 293–323 (GDIP…YVWD), and 339–369 (SHEG…KIWA).

This sequence belongs to the WD repeat G protein beta family. G proteins are composed of 3 units, alpha, beta and gamma.

It localises to the cell membrane. It is found in the endoplasmic reticulum membrane. Functionally, guanine nucleotide-binding proteins (G proteins) are involved as a modulator or transducer in various transmembrane signaling systems. The beta and gamma chains are required for the GTPase activity, for replacement of GDP by GTP, and for G protein-effector interaction. This chain is Guanine nucleotide-binding protein subunit beta, found in Nicotiana plumbaginifolia (Leadwort-leaved tobacco).